The primary structure comprises 592 residues: MAPSMKEIFSKDNFKKNKKLVLLSAAVALLFVAAVAGISAGASKANEKRTLSPSSHAVLRSSCSSTRYPELCISAVVTAGGVELTSQKDVIEASVNLTITAVEHNYFTVKKLIKKRKGLTPREKTALHDCLETIDETLDELHETVEDLHLYPTKKTLREHAGDLKTLISSAITNQETCLDGFSHDDADKQVRKALLKGQIHVEHMCSNALAMIKNMTDTDIANFEQKAKITSNNRKLKEENQETTVAVDIAGAGELDSEGWPTWLSAGDRRLLQGSGVKADATVAADGSGTFKTVAAAVAAAPENSNKRYVIHIKAGVYRENVEVAKKKKNIMFMGDGRTRTIITGSRNVVDGSTTFHSATVAAVGERFLARDITFQNTAGPSKHQAVALRVGSDFSAFYNCDMLAYQDTLYVHSNRQFFVKCLIAGTVDFIFGNAAVVLQDCDIHARRPNSGQKNMVTAQGRTDPNQNTGIVIQKCRIGATSDLQSVKGSFPTYLGRPWKEYSQTVIMQSAISDVIRPEGWSEWTGTFALNTLTYREYSNTGAGAGTANRVKWRGFKVITAAAEAQKYTAGQFIGGGGWLSSTGFPFSLGL.

Positions 1–35 (MAPSMKEIFSKDNFKKNKKLVLLSAAVALLFVAAV) are cleaved as a signal peptide. Residues 36-238 (AGISAGASKA…KITSNNRKLK (203 aa)) constitute a propeptide, removed in mature 42 kDa form. The propeptide at 36–273 (AGISAGASKA…WLSAGDRRLL (238 aa)) is removed in mature 38 kDa form. The tract at residues 53 to 212 (PSSHAVLRSS…EHMCSNALAM (160 aa)) is pectinesterase inhibitor 3. N-linked (GlcNAc...) asparagine glycans are attached at residues Asn-96 and Asn-215. The pectinesterase 3 stretch occupies residues 281-578 (DATVAADGSG…YTAGQFIGGG (298 aa)). The substrate site is built by Thr-356 and Gln-386. Asp-409 (proton donor; for pectinesterase activity) is an active-site residue. Cys-423 and Cys-443 are disulfide-bonded. Asp-430 functions as the Nucleophile; for pectinesterase activity in the catalytic mechanism. Gln-454, Arg-498, and Trp-500 together coordinate substrate.

This sequence in the N-terminal section; belongs to the PMEI family. The protein in the C-terminal section; belongs to the pectinesterase family. Interacts with BIIDXI and At5g11420. Binds reversibly to PMEI4, PMEI7 and PMEI8 to be inhibited; the stability of the PME3-PMEIs complexes and the inhibition of the pectin methylesterase (PME) activity is pH-dependent, based on protonation status of amino-acids at the complex interface. As to expression, expressed in roots, cotyledons, hypocotyls, seedlings, leaves, stems, flowers, dry seeds and siliques. Accumulates in etiolated hypocotyls (at protein level).

The protein resides in the secreted. It is found in the extracellular space. It localises to the apoplast. Its subcellular location is the cell wall. It catalyses the reaction [(1-&gt;4)-alpha-D-galacturonosyl methyl ester](n) + n H2O = [(1-&gt;4)-alpha-D-galacturonosyl](n) + n methanol + n H(+). Its pathway is glycan metabolism; pectin degradation; 2-dehydro-3-deoxy-D-gluconate from pectin: step 1/5. Its activity is regulated as follows. Regulated negatively by pectinesterase inhibitors (e.g. PMEI3, PMEI4, PMEI7 and PMEI9) in a pH-dependent manner, mainly in slightly acidic conditions (pH 6.0 and 5.0), especially in dark-grown hypocotyls; this processus relies on changes in the protonation of amino acids involved in intermolecular and intramolecular interactions. Acts in the modification of cell walls via demethylesterification of cell wall pectin. Required for zinc Zn(2+) homeostasis and to monitor Zn(2+) influence on cell wall-controlled growth processes such as root cell elongation. Monitors seed germination and favors root hairs production. Prevents cruciferin seed storage proteins activity, but promotes the expression of genes involved in cell wall organization and remodeling as well as genes involved in lipid and protein metabolism, during post-germinative growth of seedlings. Confers sensitivity to Zn(2+) when overexpressed. Acts as a susceptibility factor required for the initial colonization of the host tissue by virulent pathogens including Botrytis cinerea and Pectobacterium carotovorum, probably by facilitating cell wall pectine degradation by pathogen pectic enzymes after its demethylesterification. The chain is Pectinesterase/pectinesterase inhibitor 3 from Arabidopsis thaliana (Mouse-ear cress).